We begin with the raw amino-acid sequence, 137 residues long: MSDRLSQLQEAVDQLMEQFIATYFYIDRHHDLKTFSPKDTIAPSKADQPPEVDTLPPDVFQAGQLELARDLITREQQIEYLISSLPGLDNSEQDQLQSIKELEEELNVAEKQRQEAVKEKDEVLVKLDQTLRSIRRY.

Residues 37–56 (PKDTIAPSKADQPPEVDTLP) form a disordered region. Residues 87–130 (GLDNSEQDQLQSIKELEEELNVAEKQRQEAVKEKDEVLVKLDQT) adopt a coiled-coil conformation.

It belongs to the Mediator complex subunit 21 family. As to quaternary structure, component of the Mediator complex.

It localises to the nucleus. Its function is as follows. Component of the Mediator complex, a coactivator involved in the regulated transcription of nearly all RNA polymerase II-dependent genes. Mediator functions as a bridge to convey information from gene-specific regulatory proteins to the basal RNA polymerase II transcription machinery. Mediator is recruited to promoters by direct interactions with regulatory proteins and serves as a scaffold for the assembly of a functional preinitiation complex with RNA polymerase II and the general transcription factors. In Neurospora crassa (strain ATCC 24698 / 74-OR23-1A / CBS 708.71 / DSM 1257 / FGSC 987), this protein is Mediator of RNA polymerase II transcription subunit 21 (srb-7).